We begin with the raw amino-acid sequence, 162 residues long: Autophagy-related protein 8 (162 aa).

Over residues Met1 to Asp27 the composition is skewed to basic and acidic residues. A disordered region spans residues Met1–Gly42. A lipid anchor (Phosphatidylethanolamine amidated glycine) is attached at Gly157. The propeptide at Gly158–Ala162 is removed in mature form.

The protein belongs to the ATG8 family.

The protein localises to the cytoplasmic vesicle. It is found in the autophagosome membrane. Its subcellular location is the vacuole membrane. Ubiquitin-like modifier involved in autophagosome formation. With ATG4, mediates the delivery of the autophagosomes to the vacuole via the microtubule cytoskeleton. Required for selective autophagic degradation of the nucleus (nucleophagy) as well as for mitophagy which contributes to regulate mitochondrial quantity and quality by eliminating the mitochondria to a basal level to fulfill cellular energy requirements and preventing excess ROS production. Also participates in membrane fusion events that take place in the early secretory pathway. Also involved in endoplasmic reticulum-specific autophagic process and is essential for the survival of cells subjected to severe ER stress. The ATG8-PE conjugate mediates tethering between adjacent membranes and stimulates membrane hemifusion, leading to expansion of the autophagosomal membrane during autophagy. The chain is Autophagy-related protein 8 from Colletotrichum higginsianum (strain IMI 349063) (Crucifer anthracnose fungus).